Consider the following 463-residue polypeptide: Ribosomal protein uS12 methylthiotransferase RimO (463 aa).

The MTTase N-terminal domain occupies 15-130 (PKVGMVSLGC…VMQAVHSHLP (116 aa)). [4Fe-4S] cluster-binding residues include Cys-24, Cys-60, Cys-89, Cys-161, Cys-165, and Cys-168. Positions 147–392 (LTPRHYAYLK…MEVAEEVSAA (246 aa)) constitute a Radical SAM core domain. Residues 395-463 (ARKIGKTLKV…ADSHDLWGEV (69 aa)) enclose the TRAM domain.

Belongs to the methylthiotransferase family. RimO subfamily. [4Fe-4S] cluster is required as a cofactor.

Its subcellular location is the cytoplasm. The catalysed reaction is L-aspartate(89)-[ribosomal protein uS12]-hydrogen + (sulfur carrier)-SH + AH2 + 2 S-adenosyl-L-methionine = 3-methylsulfanyl-L-aspartate(89)-[ribosomal protein uS12]-hydrogen + (sulfur carrier)-H + 5'-deoxyadenosine + L-methionine + A + S-adenosyl-L-homocysteine + 2 H(+). Its function is as follows. Catalyzes the methylthiolation of an aspartic acid residue of ribosomal protein uS12. This Burkholderia pseudomallei (strain 668) protein is Ribosomal protein uS12 methylthiotransferase RimO.